The sequence spans 128 residues: Saitohin (128 aa).

Residues 77–128 form a disordered region; it reads SYSSEESSRNGAEQGRQLSIEGPFQGQNCPSHPAAALPLPMRGESQATSCQV.

In terms of assembly, interacts with PRDX6.

Its subcellular location is the cytoplasm. It localises to the nucleus. This Gorilla gorilla gorilla (Western lowland gorilla) protein is Saitohin (STH).